The sequence spans 514 residues: Putative fucosyltransferase 10 (514 aa).

N-linked (GlcNAc...) asparagine glycosylation is found at Asn-185, Asn-210, Asn-355, Asn-377, and Asn-456.

This sequence belongs to the glycosyltransferase 37 family. In terms of tissue distribution, expressed in root, leaves, stems and seedlings.

Its subcellular location is the golgi apparatus. It participates in protein modification; protein glycosylation. In terms of biological role, may be involved in cell wall biosynthesis. May act as a fucosyltransferase. The chain is Putative fucosyltransferase 10 (FUT10) from Arabidopsis thaliana (Mouse-ear cress).